Consider the following 359-residue polypeptide: 3-dehydroquinate synthase (359 aa).

NAD(+)-binding positions include 71 to 76 (DGEAHK), 105 to 109 (GVIGD), 129 to 130 (TT), Lys-142, Lys-151, and 169 to 172 (TLHT). The Zn(2+) site is built by Glu-184, His-247, and His-264.

Belongs to the sugar phosphate cyclases superfamily. Dehydroquinate synthase family. The cofactor is Co(2+). It depends on Zn(2+) as a cofactor. Requires NAD(+) as cofactor.

It localises to the cytoplasm. The catalysed reaction is 7-phospho-2-dehydro-3-deoxy-D-arabino-heptonate = 3-dehydroquinate + phosphate. The protein operates within metabolic intermediate biosynthesis; chorismate biosynthesis; chorismate from D-erythrose 4-phosphate and phosphoenolpyruvate: step 2/7. Its function is as follows. Catalyzes the conversion of 3-deoxy-D-arabino-heptulosonate 7-phosphate (DAHP) to dehydroquinate (DHQ). This chain is 3-dehydroquinate synthase, found in Neisseria meningitidis serogroup C (strain 053442).